A 429-amino-acid chain; its full sequence is UDP-N-acetylglucosamine 1-carboxyvinyltransferase 2 (429 aa).

22-23 (KN) is a phosphoenolpyruvate binding site. Position 92 (arginine 92) interacts with UDP-N-acetyl-alpha-D-glucosamine. Cysteine 116 acts as the Proton donor in catalysis. Cysteine 116 carries the 2-(S-cysteinyl)pyruvic acid O-phosphothioketal modification. Residues 121 to 125 (RPIDQ), aspartate 305, and isoleucine 327 contribute to the UDP-N-acetyl-alpha-D-glucosamine site.

Belongs to the EPSP synthase family. MurA subfamily.

The protein resides in the cytoplasm. The catalysed reaction is phosphoenolpyruvate + UDP-N-acetyl-alpha-D-glucosamine = UDP-N-acetyl-3-O-(1-carboxyvinyl)-alpha-D-glucosamine + phosphate. Its pathway is cell wall biogenesis; peptidoglycan biosynthesis. Its function is as follows. Cell wall formation. Adds enolpyruvyl to UDP-N-acetylglucosamine. The protein is UDP-N-acetylglucosamine 1-carboxyvinyltransferase 2 of Bacillus subtilis (strain 168).